The primary structure comprises 311 residues: HPr kinase/phosphorylase (311 aa).

Residues His-138 and Lys-159 contribute to the active site. Residue 153 to 160 coordinates ATP; the sequence is GDSGIGKS. Ser-160 contributes to the Mg(2+) binding site. Asp-177 functions as the Proton acceptor; for phosphorylation activity. Proton donor; for dephosphorylation activity in the catalytic mechanism. The tract at residues 201-210 is important for the catalytic mechanism of both phosphorylation and dephosphorylation; that stretch reads IEIRGVGIID. Glu-202 lines the Mg(2+) pocket. Residue Arg-243 is part of the active site. Residues 264–269 form an important for the catalytic mechanism of dephosphorylation region; sequence PVKTGR.

Belongs to the HPrK/P family. As to quaternary structure, homohexamer. Mg(2+) is required as a cofactor.

The enzyme catalyses [HPr protein]-L-serine + ATP = [HPr protein]-O-phospho-L-serine + ADP + H(+). It catalyses the reaction [HPr protein]-O-phospho-L-serine + phosphate + H(+) = [HPr protein]-L-serine + diphosphate. Catalyzes the ATP- as well as the pyrophosphate-dependent phosphorylation of a specific serine residue in HPr, a phosphocarrier protein of the phosphoenolpyruvate-dependent sugar phosphotransferase system (PTS). HprK/P also catalyzes the pyrophosphate-producing, inorganic phosphate-dependent dephosphorylation (phosphorolysis) of seryl-phosphorylated HPr (P-Ser-HPr). The two antagonistic activities of HprK/P are regulated by several intracellular metabolites, which change their concentration in response to the absence or presence of rapidly metabolisable carbon sources (glucose, fructose, etc.) in the growth medium. Therefore, by controlling the phosphorylation state of HPr, HPrK/P is a sensor enzyme that plays a major role in the regulation of carbon metabolism and sugar transport: it mediates carbon catabolite repression (CCR), and regulates PTS-catalyzed carbohydrate uptake and inducer exclusion. The polypeptide is HPr kinase/phosphorylase (Streptococcus pneumoniae serotype 2 (strain D39 / NCTC 7466)).